The following is a 218-amino-acid chain: Probable GTP-binding protein EngB (218 aa).

One can recognise an EngB-type G domain in the interval 44–218; sequence DRIEVCFAGR…LRATIATIET (175 aa). Residues 52–59, 79–83, 97–100, 164–167, and 198–200 each bind GTP; these read GRSNVGKS, GRTQE, DLPG, TKSD, and TSS. The Mg(2+) site is built by Ser59 and Thr81.

This sequence belongs to the TRAFAC class TrmE-Era-EngA-EngB-Septin-like GTPase superfamily. EngB GTPase family. It depends on Mg(2+) as a cofactor.

Necessary for normal cell division and for the maintenance of normal septation. The protein is Probable GTP-binding protein EngB of Jannaschia sp. (strain CCS1).